A 429-amino-acid polypeptide reads, in one-letter code: Gamma-glutamyl phosphate reductase (429 aa).

Belongs to the gamma-glutamyl phosphate reductase family.

Its subcellular location is the cytoplasm. It carries out the reaction L-glutamate 5-semialdehyde + phosphate + NADP(+) = L-glutamyl 5-phosphate + NADPH + H(+). The protein operates within amino-acid biosynthesis; L-proline biosynthesis; L-glutamate 5-semialdehyde from L-glutamate: step 2/2. Its function is as follows. Catalyzes the NADPH-dependent reduction of L-glutamate 5-phosphate into L-glutamate 5-semialdehyde and phosphate. The product spontaneously undergoes cyclization to form 1-pyrroline-5-carboxylate. The protein is Gamma-glutamyl phosphate reductase of Bradyrhizobium sp. (strain ORS 278).